A 30-amino-acid chain; its full sequence is Cycloviolin-D (30 aa).

Residues 1–30 constitute a cross-link (cyclopeptide (Gly-Asn)); sequence GFPCGESCVFIPCISAAIGCSCKNKVCYRN. 3 disulfide bridges follow: cysteine 4–cysteine 20, cysteine 8–cysteine 22, and cysteine 13–cysteine 27.

This is a cyclic peptide.

In terms of biological role, probably participates in a plant defense mechanism. Has anti-HIV activity. The chain is Cycloviolin-D from Leonia cymosa (Sacha uba).